Here is a 229-residue protein sequence, read N- to C-terminus: Urease accessory protein UreF (229 aa).

The protein belongs to the UreF family. As to quaternary structure, ureD, UreF and UreG form a complex that acts as a GTP-hydrolysis-dependent molecular chaperone, activating the urease apoprotein by helping to assemble the nickel containing metallocenter of UreC. The UreE protein probably delivers the nickel.

The protein resides in the cytoplasm. Functionally, required for maturation of urease via the functional incorporation of the urease nickel metallocenter. The sequence is that of Urease accessory protein UreF from Nostoc sp. (strain PCC 7120 / SAG 25.82 / UTEX 2576).